The following is a 185-amino-acid chain: uncharacterized protein (185 aa).

The next 5 membrane-spanning stretches (helical) occupy residues 4 to 24, 35 to 55, 60 to 80, 123 to 143, and 152 to 172; these read IAWMIVFCEIAFWVVIVLGLA, GLLFLALTPVIDLILLAATGV, GASATAAHGIAAVYIGISIAY, VLAYLIGAGLLAGMIYFINDS, and ILKLWTVIIGIDFLITASYFI.

The protein localises to the cell membrane. This is an uncharacterized protein from Bacillus subtilis (strain 168).